The chain runs to 598 residues: Elongation factor 4 2 (598 aa).

The region spanning 2-184 is the tr-type G domain; sequence KHIRNFCIIA…GIVKNLPAPK (183 aa). Residues 14 to 19 and 131 to 134 each bind GTP; these read DHGKST and NKID.

This sequence belongs to the TRAFAC class translation factor GTPase superfamily. Classic translation factor GTPase family. LepA subfamily.

It localises to the cell inner membrane. The enzyme catalyses GTP + H2O = GDP + phosphate + H(+). Its function is as follows. Required for accurate and efficient protein synthesis under certain stress conditions. May act as a fidelity factor of the translation reaction, by catalyzing a one-codon backward translocation of tRNAs on improperly translocated ribosomes. Back-translocation proceeds from a post-translocation (POST) complex to a pre-translocation (PRE) complex, thus giving elongation factor G a second chance to translocate the tRNAs correctly. Binds to ribosomes in a GTP-dependent manner. This is Elongation factor 4 2 from Rhodopirellula baltica (strain DSM 10527 / NCIMB 13988 / SH1).